Consider the following 596-residue polypeptide: Estrogen receptor (596 aa).

The interval Met-1–Tyr-185 is modulating (transactivation AF-1); mediates interaction with MACROD1. Residue Ser-10 is glycosylated (O-linked (GlcNAc) serine). Residues Glu-36–Lys-48 form a required for interaction with NCOA1 region. Positions Glu-36–Met-175 are interaction with DDX5; self-association. Residues Ser-104 and Ser-106 each carry the phosphoserine; by CDK2 modification. Ser-119 carries the post-translational modification Phosphoserine. Positions Glu-144–Met-175 are disordered. Positions Ser-155–Leu-166 are enriched in basic and acidic residues. At Ser-168 the chain carries Phosphoserine; by CK2. 2 NR C4-type zinc fingers span residues Cys-186–Cys-206 and Cys-222–Cys-246. The nuclear receptor DNA-binding region spans Cys-186 to Met-251. The mediates interaction with DNTTIP2 stretch occupies residues Cys-186–Leu-311. Positions Met-252 to Leu-311 are hinge. The segment covering Asp-259 to Arg-270 has biased composition (basic residues). The segment at Asp-259 to Gly-285 is disordered. Arg-261 is modified (asymmetric dimethylarginine; by PRMT1). The tract at residues Gly-263–Val-596 is interaction with AKAP13. Residues Met-265–Thr-595 are self-association. Residues Thr-312 to His-548 form the NR LBD domain. The transactivation AF-2 stretch occupies residues Thr-312–Thr-595. Residues Glu-354 and Arg-395 each coordinate 17beta-estradiol. Cys-448 carries S-palmitoyl cysteine lipidation. His-525 contributes to the 17beta-estradiol binding site. The residue at position 538 (Tyr-538) is a Phosphotyrosine; by Tyr-kinases. Thr-572 is a glycosylation site (O-linked (GlcNAc) threonine).

Belongs to the nuclear hormone receptor family. NR3 subfamily. As to quaternary structure, binds DNA as a homodimer. Can form a heterodimer with ESR2. Interacts with coactivator NCOA5. Interacts with PELP1, the interaction is enhanced by 17-beta-estradiol; the interaction increases ESR1 transcriptional activity. Interacts with NCOA7; the interaction is ligand-inducible. Interacts with AKAP13, CUEDC2, HEXIM1, KDM5A, MAP1S, SMARD1, and UBE1C. Interacts with MUC1; the interaction is stimulated by 7 beta-estradiol (E2) and enhances ESR1-mediated transcription. Interacts with DNTTIP2, and UIMC1. Interacts with KMT2D/MLL2. Interacts with ATAD2; the interaction is enhanced by estradiol. Interacts with KIF18A and LDB1. Interacts with RLIM (via its C-terminus). Interacts with MACROD1. Interacts with SH2D4A and PLCG. Interacts with SH2D4A; the interaction blocks binding to PLCG and inhibits estrogen-induced cell proliferation. Interacts with DYNLL1. Interacts with CCDC62; the interaction requires estradiol and appears to enhance the transcription of target genes. Interacts with NR2C1; the interaction prevents homodimerization of ESR1 and suppresses its transcriptional activity and cell growth. Interacts with DNAAF4. Interacts with PRMT2. Interacts with RBFOX2. Interacts with EP300; the interaction is estrogen-dependent and enhanced by CITED1. Interacts with CITED1; the interaction is estrogen-dependent. Interacts with FAM120B, FOXL2, PHB2 and SLC30A9. Interacts with coactivators NCOA3 and NCOA6. Interacts with STK3/MST2 only in the presence of SAV1 and vice-versa. Binds to CSNK1D. Interacts with NCOA2; NCOA2 can interact with ESR1 AF-1 and AF-2 domains simultaneously and mediate their transcriptional synergy. Interacts with DDX5. Interacts with NCOA1; the interaction seems to require a self-association of N-terminal and C-terminal regions. Interacts with ZNF366, DDX17, NFKB1, RELA, SP1 and SP3. Interacts with NRIP1. Interacts with GPER1; the interaction occurs in an estrogen-dependent manner. Interacts with CLOCK and the interaction is stimulated by estrogen. Interacts with TRIP4 (ufmylated); estrogen dependent. Interacts with LMTK3; the interaction phosphorylates ESR1 (in vitro) and protects it against proteasomal degradation. Interacts with CCAR2 (via N-terminus) in a ligand-independent manner. Interacts with ZFHX3. Interacts with SFR1 in a ligand-dependent and -independent manner. Interacts with DCAF13, LATS1 and DCAF1; regulates ESR1 ubiquitination and ubiquitin-mediated proteasomal degradation. Interacts (via DNA-binding domain) with POU4F2 (C-terminus); this interaction increases the estrogen receptor ESR1 transcriptional activity in a DNA- and ligand 17-beta-estradiol-independent manner. Interacts with ESRRB isoform 1. Interacts with UBE3A and WBP2. Interacts with GTF2B. Interacts with RBM39. In the absence of hormonal ligand, interacts with TACC1. Interacts with PI3KR1 or PI3KR2 and PTK2/FAK1. Interacts with SRC. Interacts with BAG1; the interaction is promoted in the absence of estradiol (17-beta-estradiol/E2). Interacts with and ubiquitinated by STUB1; the interaction is promoted in the absence of estradiol (17-beta-estradiol/E2). Interacts with NEDD8. Glycosylated; contains N-acetylglucosamine, probably O-linked. Post-translationally, ubiquitinated; regulated by LATS1 via DCAF1 it leads to ESR1 proteasomal degradation. Deubiquitinated by OTUB1. Ubiquitinated by STUB1/CHIP; in the CA1 hippocampal region following loss of endogenous circulating estradiol (17-beta-estradiol/E2). Ubiquitinated by UBR5, leading to its degradation: UBR5 specifically recognizes and binds ligand-bound ESR1 when it is not associated with coactivators (NCOAs). In presence of NCOAs, the UBR5-degron is not accessible, preventing its ubiquitination and degradation. In terms of processing, phosphorylated by cyclin A/CDK2 and CK1. Phosphorylation probably enhances transcriptional activity. Dephosphorylation at Ser-119 by PPP5C inhibits its transactivation activity. Phosphorylated by LMTK3 (in vitro). Palmitoylated at Cys-448 by ZDHHC7 and ZDHHC21. Palmitoylation is required for plasma membrane targeting and for rapid intracellular signaling via ERK and AKT kinases and cAMP generation, but not for signaling mediated by the nuclear hormone receptor. Post-translationally, dimethylated by PRMT1 at Arg-261. The methylation may favor cytoplasmic localization. Demethylated by JMJD6 at Arg-261.

It localises to the nucleus. The protein localises to the cytoplasm. Its subcellular location is the golgi apparatus. It is found in the cell membrane. Functionally, nuclear hormone receptor. The steroid hormones and their receptors are involved in the regulation of eukaryotic gene expression and affect cellular proliferation and differentiation in target tissues. Ligand-dependent nuclear transactivation involves either direct homodimer binding to a palindromic estrogen response element (ERE) sequence or association with other DNA-binding transcription factors, such as AP-1/c-Jun, c-Fos, ATF-2, Sp1 and Sp3, to mediate ERE-independent signaling. Ligand binding induces a conformational change allowing subsequent or combinatorial association with multiprotein coactivator complexes through LXXLL motifs of their respective components. Mutual transrepression occurs between the estrogen receptor (ER) and NF-kappa-B in a cell-type specific manner. Decreases NF-kappa-B DNA-binding activity and inhibits NF-kappa-B-mediated transcription from the IL6 promoter and displace RELA/p65 and associated coregulators from the promoter. Recruited to the NF-kappa-B response element of the CCL2 and IL8 promoters and can displace CREBBP. Present with NF-kappa-B components RELA/p65 and NFKB1/p50 on ERE sequences. Can also act synergistically with NF-kappa-B to activate transcription involving respective recruitment adjacent response elements; the function involves CREBBP. Can activate the transcriptional activity of TFF1. Also mediates membrane-initiated estrogen signaling involving various kinase cascades. Essential for MTA1-mediated transcriptional regulation of BRCA1 and BCAS3. Maintains neuronal survival in response to ischemic reperfusion injury when in the presence of circulating estradiol (17-beta-estradiol/E2). In Bos taurus (Bovine), this protein is Estrogen receptor (ESR1).